A 516-amino-acid chain; its full sequence is 2-isopropylmalate synthase (516 aa).

Residues 5-267 (VIIFDTTLRD…TTGIKHDEIS (263 aa)) enclose the Pyruvate carboxyltransferase domain. Residues aspartate 14, histidine 202, histidine 204, and asparagine 238 each coordinate Mn(2+). The tract at residues 392-516 (KLNYLSVQSG…IKQKKSVATV (125 aa)) is regulatory domain.

The protein belongs to the alpha-IPM synthase/homocitrate synthase family. LeuA type 1 subfamily. In terms of assembly, homodimer. Requires Mn(2+) as cofactor.

It is found in the cytoplasm. It carries out the reaction 3-methyl-2-oxobutanoate + acetyl-CoA + H2O = (2S)-2-isopropylmalate + CoA + H(+). The protein operates within amino-acid biosynthesis; L-leucine biosynthesis; L-leucine from 3-methyl-2-oxobutanoate: step 1/4. Its function is as follows. Catalyzes the condensation of the acetyl group of acetyl-CoA with 3-methyl-2-oxobutanoate (2-ketoisovalerate) to form 3-carboxy-3-hydroxy-4-methylpentanoate (2-isopropylmalate). The protein is 2-isopropylmalate synthase of Vibrio cholerae serotype O1 (strain ATCC 39315 / El Tor Inaba N16961).